Here is a 421-residue protein sequence, read N- to C-terminus: Adenylosuccinate synthetase (421 aa).

GTP-binding positions include 11-17 and 39-41; these read GDEGKGK and GHT. Asp-12 functions as the Proton acceptor in the catalytic mechanism. Residues Asp-12 and Gly-39 each coordinate Mg(2+). IMP-binding positions include 12 to 15, 37 to 40, Thr-129, Arg-143, Asn-219, Thr-234, and Arg-298; these read DEGK and NAGH. His-40 acts as the Proton donor in catalysis. Position 294-300 (294-300) interacts with substrate; sequence VTTGRRR. Residues Arg-300, 326-328, and 409-411 contribute to the GTP site; these read KLD and GTG.

This sequence belongs to the adenylosuccinate synthetase family. In terms of assembly, homodimer. Requires Mg(2+) as cofactor.

The protein localises to the cytoplasm. The catalysed reaction is IMP + L-aspartate + GTP = N(6)-(1,2-dicarboxyethyl)-AMP + GDP + phosphate + 2 H(+). It functions in the pathway purine metabolism; AMP biosynthesis via de novo pathway; AMP from IMP: step 1/2. Plays an important role in the de novo pathway and in the salvage pathway of purine nucleotide biosynthesis. Catalyzes the first committed step in the biosynthesis of AMP from IMP. The chain is Adenylosuccinate synthetase from Paracoccidioides brasiliensis (strain Pb03).